Here is a 345-residue protein sequence, read N- to C-terminus: N-glycosylase/DNA lyase (345 aa).

Residues Asn149, Arg154, and Arg204 each contribute to the DNA site. Catalysis depends on Lys249, which acts as the Schiff-base intermediate with DNA. 8-oxoguanine contacts are provided by Pro266 and Asp268. Residues His270 and Gln287 each coordinate DNA. 8-oxoguanine is bound by residues Gln315 and Phe319.

The protein belongs to the type-1 OGG1 family. As to expression, highest expression in testis.

Its subcellular location is the nucleus. The protein localises to the nucleoplasm. It localises to the nucleus speckle. It is found in the nucleus matrix. The enzyme catalyses 2'-deoxyribonucleotide-(2'-deoxyribose 5'-phosphate)-2'-deoxyribonucleotide-DNA = a 3'-end 2'-deoxyribonucleotide-(2,3-dehydro-2,3-deoxyribose 5'-phosphate)-DNA + a 5'-end 5'-phospho-2'-deoxyribonucleoside-DNA + H(+). DNA repair enzyme that incises DNA at 8-oxoG residues. Excises 7,8-dihydro-8-oxoguanine and 2,6-diamino-4-hydroxy-5-N-methylformamidopyrimidine (FAPY) from damaged DNA. Has a beta-lyase activity that nicks DNA 3' to the lesion. The sequence is that of N-glycosylase/DNA lyase (Ogg1) from Mus musculus (Mouse).